The primary structure comprises 401 residues: Succinyl-diaminopimelate desuccinylase (401 aa).

H71 lines the Zn(2+) pocket. D73 is an active-site residue. D104 lines the Zn(2+) pocket. The Proton acceptor role is filled by E138. Zn(2+) contacts are provided by E139, E167, and H352.

Belongs to the peptidase M20A family. DapE subfamily. Homodimer. Requires Zn(2+) as cofactor. Co(2+) serves as cofactor.

It carries out the reaction N-succinyl-(2S,6S)-2,6-diaminopimelate + H2O = (2S,6S)-2,6-diaminopimelate + succinate. It functions in the pathway amino-acid biosynthesis; L-lysine biosynthesis via DAP pathway; LL-2,6-diaminopimelate from (S)-tetrahydrodipicolinate (succinylase route): step 3/3. Its function is as follows. Catalyzes the hydrolysis of N-succinyl-L,L-diaminopimelic acid (SDAP), forming succinate and LL-2,6-diaminopimelate (DAP), an intermediate involved in the bacterial biosynthesis of lysine and meso-diaminopimelic acid, an essential component of bacterial cell walls. The sequence is that of Succinyl-diaminopimelate desuccinylase from Wolbachia sp. subsp. Brugia malayi (strain TRS).